The chain runs to 59 residues: Small ribosomal subunit protein bS21 (59 aa).

It belongs to the bacterial ribosomal protein bS21 family.

The sequence is that of Small ribosomal subunit protein bS21 from Acholeplasma laidlawii (strain PG-8A).